A 122-amino-acid polypeptide reads, in one-letter code: Basic phospholipase A2 PLA-B (122 aa).

Cystine bridges form between cysteine 26–cysteine 115, cysteine 28–cysteine 44, cysteine 43–cysteine 95, cysteine 49–cysteine 122, cysteine 50–cysteine 88, cysteine 57–cysteine 81, and cysteine 75–cysteine 86. Ca(2+) contacts are provided by tyrosine 27, glycine 29, and glycine 31. Histidine 47 is an active-site residue. A Ca(2+)-binding site is contributed by aspartate 48. Aspartate 89 is a catalytic residue.

This sequence belongs to the phospholipase A2 family. Group II subfamily. D49 sub-subfamily. Requires Ca(2+) as cofactor. Expressed by the venom gland.

The protein resides in the secreted. It carries out the reaction a 1,2-diacyl-sn-glycero-3-phosphocholine + H2O = a 1-acyl-sn-glycero-3-phosphocholine + a fatty acid + H(+). Its function is as follows. Snake venom phospholipase A2 (PLA2) that displays edema-inducing activities. PLA-B is three times more active than PLA-A in edema-inducing activities. PLA2 catalyzes the calcium-dependent hydrolysis of the 2-acyl groups in 3-sn-phosphoglycerides. This is Basic phospholipase A2 PLA-B from Protobothrops flavoviridis (Habu).